The primary structure comprises 419 residues: Tyrosine--tRNA ligase (419 aa).

Tyr-42 is a binding site for L-tyrosine. A 'HIGH' region motif is present at residues 47-56 (ATAPSLHVGS). Tyr-179 and Gln-183 together coordinate L-tyrosine. Residues 239 to 243 (KMGKT) carry the 'KMSKS' region motif. Lys-242 is an ATP binding site. Positions 353–418 (IVLANLFADA…GKKKIVLVKP (66 aa)) constitute an S4 RNA-binding domain.

It belongs to the class-I aminoacyl-tRNA synthetase family. TyrS type 1 subfamily. As to quaternary structure, homodimer.

The protein resides in the cytoplasm. It catalyses the reaction tRNA(Tyr) + L-tyrosine + ATP = L-tyrosyl-tRNA(Tyr) + AMP + diphosphate + H(+). Functionally, catalyzes the attachment of tyrosine to tRNA(Tyr) in a two-step reaction: tyrosine is first activated by ATP to form Tyr-AMP and then transferred to the acceptor end of tRNA(Tyr). This is Tyrosine--tRNA ligase from Caulobacter sp. (strain K31).